The following is a 301-amino-acid chain: Probable alpha-L-glutamate ligase (301 aa).

Residues Leu-104–Glu-287 enclose the ATP-grasp domain. ATP is bound by residues Lys-141, Glu-178–Tyr-179, Asp-187, and Arg-211–Asn-213. 3 residues coordinate Mg(2+): Asp-248, Glu-260, and Asn-262. Residues Asp-248, Glu-260, and Asn-262 each contribute to the Mn(2+) site.

Belongs to the RimK family. Mg(2+) is required as a cofactor. Mn(2+) serves as cofactor.

This chain is Probable alpha-L-glutamate ligase, found in Photobacterium profundum (strain SS9).